Reading from the N-terminus, the 469-residue chain is MSALTPPTDMPTPTTDKITQAAMETIYLCKFRVSMDGEWLCLRELDDISLTPDPEPTHEDPNYLMANERMNLMNMAKLSIKGLIESALNLGRTLDSDYAPLQQFFVVMEHCLKHGLKAKKTFLGQNKSFWGPLELVEKLVPEAAEITASVKDLPGLKTPVGRGRAWLRLALMQKKLSEYMKALINKKELLSEFYEVNALMMEEEGAIIAGLLVGLNVIDANFCMKGEDLDSQVGVIDFSMYLKDGNSSKGSEGDGQITAILDQKNYVEELNRHLNATVNNLQTKVDLLEKSNTKLTEELAVANNRIITLQEEMERVKEESSYLLESNRKGPKQDRTAEGQALSEARKHLKEETQLRLDVEKELELQISMRQEMELAMKMLEKDVCEKQDALVSLRQQLDDLRALKHELAFKLQSSDLGVKQKSELNSRLEEKTNQMAATIKQLEQSEKDLVKQAKTLNSAANKLIPKHH.

Residues T5 and T12 each carry the phosphothreonine modification. Y27, S34, and S49 each carry phosphoserine. T51 is subject to Phosphothreonine. Phosphoserine is present on D53. The RUN domain occupies 95 to 227; it reads DSDYAPLQQF…IDANFCMKGE (133 aa). Coiled coils occupy residues 271–362 and 422–463; these read NRHL…VEKE and KSEL…AANK. The segment covering 321-337 has biased composition (basic and acidic residues); the sequence is SYLLESNRKGPKQDRTA. The interval 321–342 is disordered; that stretch reads SYLLESNRKGPKQDRTAEGQAL.

As to quaternary structure, interacts with PAK1. Interacts (via C-terminus) with Ras-related Rab-5 proteins. Interacts (via C-terminus) with Ras-related Rap-2 proteins. Interacts with PIK3CA and PIK3R1. Interacts (via N-terminus) with FSCN1; this interaction induces neuron axon development. Interacts with DBN1. Interacts (via the second coiled coil) with GTP-, but not GDP-bound ARL8A and ARL8B. Interacts with dynactin/DCTN1 and the dynein intermediate chain DYNC1I1/2. Directly interacts with DYNC1LI1. In terms of processing, phosphorylated by PAK1. Isoform 1 is partially phosphorylated. Expressed in brain (at protein level).

It is found in the cytoplasm. Its subcellular location is the endomembrane system. The protein resides in the cell projection. The protein localises to the invadopodium. It localises to the growth cone. It is found in the perikaryon. Its subcellular location is the filopodium. The protein resides in the lamellipodium. The protein localises to the lysosome. ARL8 effector that promotes the coupling of endolysosomes to dynein-dynactin for retrograde transport along microtubules. Acts by binding both GTP-bound ARL8 and dynein-dynactin. In nonneuronal cells, promotes concentration of endolysosomes in the juxtanuclear area. In hippocampal neurons, drives retrograde transport of endolysosomes from the axon to the soma. Plays a role in the generation of neuronal polarity formation and axon growth. Implicated in the formation of a single axon by developing neurons. May inhibit the formation of additional axons by inhibition of PI3K in minor neuronal processes. Plays a role in the formation of F-actin-enriched protrusive structures at the cell periphery. Plays a role in cytoskeletal organization by regulating the subcellular localization of FSCN1 and DBN1 at axonal growth cones. The protein is Protein RUFY3 of Mus musculus (Mouse).